Here is a 189-residue protein sequence, read N- to C-terminus: Apolipoprotein D (189 aa).

The signal sequence occupies residues 1-20 (MGMMLLLLSMLAGLVAEAEG). Q21 carries the pyrrolidone carboxylic acid modification. 2 disulfides stabilise this stretch: C28–C134 and C61–C185. Residues N65 and N98 are each glycosylated (N-linked (GlcNAc...) asparagine).

It belongs to the calycin superfamily. Lipocalin family. In terms of assembly, homodimer.

Its subcellular location is the secreted. In terms of biological role, APOD occurs in the macromolecular complex with lecithin-transport and binding of bilin. Appears to be able to transport a variety of ligands in a number of different contexts. This chain is Apolipoprotein D (APOD), found in Cavia porcellus (Guinea pig).